Here is a 58-residue protein sequence, read N- to C-terminus: Small ribosomal subunit protein bS21 (58 aa).

The segment at R36–R58 is disordered. Residues Y45 to R58 show a composition bias toward basic residues.

It belongs to the bacterial ribosomal protein bS21 family.

This chain is Small ribosomal subunit protein bS21, found in Prochlorococcus marinus (strain NATL1A).